The primary structure comprises 95 residues: UPF0473 protein CD630_12860 (95 aa).

The protein belongs to the UPF0473 family.

This Clostridioides difficile (strain 630) (Peptoclostridium difficile) protein is UPF0473 protein CD630_12860.